The following is a 127-amino-acid chain: Fatty acid-binding protein, liver (127 aa).

The residue at position 1 (Met-1) is an N-acetylmethionine. Ser-11 bears the Phosphoserine mark. 2 positions are modified to N6-succinyllysine: Lys-31 and Lys-36. Position 39 is a phosphoserine (Ser-39). N6-succinyllysine is present on Lys-46. Thr-51 is subject to Phosphothreonine. N6-succinyllysine occurs at positions 57 and 78. At Lys-84 the chain carries N6-acetyllysine; alternate. Position 84 is an N6-succinyllysine; alternate (Lys-84). An N6-succinyllysine modification is found at Lys-90. At Ser-100 the chain carries Phosphoserine. The residue at position 121 (Lys-121) is an N6-succinyllysine.

The protein belongs to the calycin superfamily. Fatty-acid binding protein (FABP) family.

Its subcellular location is the cytoplasm. Its function is as follows. Plays a role in lipoprotein-mediated cholesterol uptake in hepatocytes. Binds cholesterol. Binds free fatty acids and their coenzyme A derivatives, bilirubin, and some other small molecules in the cytoplasm. May be involved in intracellular lipid transport. The protein is Fatty acid-binding protein, liver (Fabp1) of Mus musculus (Mouse).